The sequence spans 861 residues: Nuclear cap-binding protein complex subunit 1 (861 aa).

Residues 22–30 (RMPKRQRIP) carry the Nuclear localization signal motif. One can recognise an MIF4G domain in the interval 36–264 (CKEMMPDIRT…LVRVVLPNVK (229 aa)).

It belongs to the NCBP1 family. In terms of assembly, component of the nuclear cap-binding complex (CBC), a heterodimer composed of STO1/CBC1 and CBC2 that interacts with capped RNAs. The complex interacts strongly with the importin subunit alpha SRP1. The SRP1-CBC trimer also binds to capped RNAs, but formation of the importin alpha/beta heterodimer upon binding of KAP95 to SRP1 in the cytoplasm causes dissociation of CBC from the RNA. The CBC complex is part of the commitment complex 1 (CC1), binding to the cap of pre-mRNA and interacting with U1 snRNP subunits MUD2 and SNU56. The CBC complex is part of the NRD1 complex, composed of CBC2, NAB1, NRD1, SEN1 and STO1/CBC2. The CBC complex also interacts with NPL3 and eIF4G (TIF4631 and TIF4632).

It localises to the nucleus. The protein localises to the cytoplasm. It is found in the perinuclear region. In terms of biological role, component of the CBC complex, which binds co-transcriptionally to the 5'-cap of pre-mRNAs and is involved in maturation, export and degradation of nuclear mRNAs. The CBC complex is required for efficient pre-mRNA splicing through efficient commitment complex and spliceosome formation. Together with NPL3, the CBC complex is required for export of mRNAs out of the nucleus. The CBC complex is also involved in nuclear mRNA degradation, probably by directing the mRNAs to the sites of degradation. Affects replication of the positive-strand RNA virus BMV. This is Nuclear cap-binding protein complex subunit 1 (STO1) from Saccharomyces cerevisiae (strain ATCC 204508 / S288c) (Baker's yeast).